The primary structure comprises 842 residues: Leucine--tRNA ligase (842 aa).

Positions proline 44–histidine 55 match the 'HIGH' region motif. Residues lysine 619 to serine 623 carry the 'KMSKS' region motif. Lysine 622 provides a ligand contact to ATP.

This sequence belongs to the class-I aminoacyl-tRNA synthetase family.

Its subcellular location is the cytoplasm. The catalysed reaction is tRNA(Leu) + L-leucine + ATP = L-leucyl-tRNA(Leu) + AMP + diphosphate. This is Leucine--tRNA ligase from Borrelia hermsii (strain HS1 / DAH).